The following is a 350-amino-acid chain: F(420)H(2) dehydrogenase subunit H (350 aa).

The next 8 membrane-spanning stretches (helical) occupy residues 21 to 41 (GTVGLVLVGAIFLGGMAAVWI), 94 to 114 (VFMLTSLFLMLVAIPVGAVFI), 128 to 148 (ISILFIEAVSAINIFGIFMAA), 173 to 193 (PLGIAIVSVAVMTGSLNIIDI), 200 to 220 (FVWNIFLQPIGFVVFFIALMA), 261 to 281 (ILGSFLVALLFLGGWNVPAFV), 288 to 308 (GLIAPTGILLLKTVLVLMTII), and 330 to 350 (LLPLSLLNLAWAVGLGLYLGA).

Belongs to the complex I subunit 1 family. In terms of assembly, the FPO complex is composed of at least 13 different subunits. FpoA, FpoH, FpoJ, FpoK, FpoL, FpoM and FpoN proteins constitute the membrane sector of the complex.

The protein localises to the cell membrane. The catalysed reaction is methanophenazine + reduced coenzyme F420-(gamma-L-Glu)(n) = dihydromethanophenazine + oxidized coenzyme F420-(gamma-L-Glu)(n) + H(+). Functionally, component of the F(420)H(2) dehydrogenase (FPO complex) which is part of the energy-conserving F(420)H(2):heterodisulfide oxidoreductase system. The membrane-bound electron transfer system of the complex plays an important role in the metabolism of methylotrophic methanogens when the organisms grow on methanol or methylamines. Catalyzes the oxidation of methanophenazine to dihydromethanophenazine. It shuttles electrons from F(420)H(2), via FAD and iron-sulfur (Fe-S) centers, to methanophenazine (an electron carrier in the membrane). It couples the redox reaction to proton translocation (for every two electrons transferred, two hydrogen ions are translocated across the cytoplasmic membrane), and thus conserves the redox energy in a proton gradient. It also catalyzes the oxidation of F(420)H(2) with quinones such as 2,3-dimethyl-1,4-naphthoquinone, 2-methyl-1,4-naphthoquinone and tetramethyl-p-benzoquinone. The sequence is that of F(420)H(2) dehydrogenase subunit H from Methanosarcina mazei (strain ATCC BAA-159 / DSM 3647 / Goe1 / Go1 / JCM 11833 / OCM 88) (Methanosarcina frisia).